The primary structure comprises 78 residues: Large ribosomal subunit protein bL28 (78 aa).

The disordered stretch occupies residues 1-29; sequence MSAHCQVTGRQPSFGKSVSHSHRRTSRRW.

Belongs to the bacterial ribosomal protein bL28 family.

This chain is Large ribosomal subunit protein bL28, found in Corynebacterium efficiens (strain DSM 44549 / YS-314 / AJ 12310 / JCM 11189 / NBRC 100395).